A 586-amino-acid polypeptide reads, in one-letter code: Asparagine synthetase [glutamine-hydrolyzing] (586 aa).

C2 functions as the For GATase activity in the catalytic mechanism. Residues 2-185 (CGILAVLGCS…PGHLYSSKSG (184 aa)) enclose the Glutamine amidotransferase type-2 domain. Residues 50–54 (RLAII), 75–77 (NGE), and D98 contribute to the L-glutamine site. Positions 194-517 (PPWFNESVPS…PQNSARLTVP (324 aa)) constitute an Asparagine synthetase domain. ATP contacts are provided by residues L232, V268, and 342–343 (SG).

The protein belongs to the asparagine synthetase family.

The enzyme catalyses L-aspartate + L-glutamine + ATP + H2O = L-asparagine + L-glutamate + AMP + diphosphate + H(+). It participates in amino-acid biosynthesis; L-asparagine biosynthesis; L-asparagine from L-aspartate (L-Gln route): step 1/1. The polypeptide is Asparagine synthetase [glutamine-hydrolyzing] (Brassica oleracea (Wild cabbage)).